Here is a 2216-residue protein sequence, read N- to C-terminus: RNA-directed RNA polymerase L (2216 aa).

The endonuclease stretch occupies residues 26-289 (KTSFLSQVNL…ETRTAMLDER (264 aa)). The Mn(2+) site is built by Glu-51, Asp-88, and Glu-101. Lys-114 is an active-site residue. Residues 1167 to 1364 (LDMKCVVRLS…YLSSKFNKFV (198 aa)) form the RdRp catalytic domain. Mg(2+) is bound at residue Asp-1323.

It belongs to the Bunyavirales RNA polymerase family. Homomultimer; the oligomeric structure is essential for the polymerase activity. Interacts with nucleoprotein N. Interacts with protein Z; this interaction inhibits viral transcription and replication, Z partially blocks the product exit tunnel for the releasing nascent RNA product. Mn(2+) is required as a cofactor. The cofactor is Mg(2+).

It localises to the virion. It is found in the host cytoplasm. It carries out the reaction RNA(n) + a ribonucleoside 5'-triphosphate = RNA(n+1) + diphosphate. In terms of biological role, RNA-dependent RNA polymerase, which is responsible for the replication and transcription of the viral RNA genome using antigenomic RNA as an intermediate. During transcription, synthesizes subgenomic RNAs and assures their capping by a cap-snatching mechanism, which involves the endonuclease activity cleaving the host capped pre-mRNAs. These short capped RNAs are then used as primers for viral transcription. The 3'-end of subgenomic mRNAs molecules are heterogeneous and not polyadenylated. The replicase function is to direct synthesis of antigenomic and genomic RNA which are encapsidated and non capped. As a consequence of the use of the same enzyme for both transcription and replication, these mechanisms need to be well coordinated. These processes may be regulated by proteins N and Z in a dose-dependent manner. Z protein inhibits the viral polymerase L und thus the viral transcription and RNA synthesis. This chain is RNA-directed RNA polymerase L, found in Bear Canyon mammarenavirus (isolate Mouse/United States/AV A0070039/2000) (BCNV).